We begin with the raw amino-acid sequence, 344 residues long: Fructose-1,6-bisphosphatase class 1 (344 aa).

Residues Glu91, Asp110, Leu112, and Asp113 each coordinate Mg(2+). Substrate contacts are provided by residues 113–116 (DGSS) and Asn200. Glu272 contacts Mg(2+).

The protein belongs to the FBPase class 1 family. Homotetramer. The cofactor is Mg(2+).

It localises to the cytoplasm. It carries out the reaction beta-D-fructose 1,6-bisphosphate + H2O = beta-D-fructose 6-phosphate + phosphate. It participates in carbohydrate biosynthesis; Calvin cycle. The chain is Fructose-1,6-bisphosphatase class 1 from Rhodopseudomonas palustris (strain BisA53).